We begin with the raw amino-acid sequence, 223 residues long: Type III pantothenate kinase (223 aa).

17–24 (DIGNTHIH) provides a ligand contact to ATP. Residues Tyr81 and 85 to 88 (GIDR) contribute to the substrate site. The active-site Proton acceptor is Asp87. Asp102 provides a ligand contact to K(+). Ser105 contacts ATP. Position 157 (Thr157) interacts with substrate.

This sequence belongs to the type III pantothenate kinase family. Homodimer. The cofactor is NH4(+). It depends on K(+) as a cofactor.

Its subcellular location is the cytoplasm. The catalysed reaction is (R)-pantothenate + ATP = (R)-4'-phosphopantothenate + ADP + H(+). It functions in the pathway cofactor biosynthesis; coenzyme A biosynthesis; CoA from (R)-pantothenate: step 1/5. Its function is as follows. Catalyzes the phosphorylation of pantothenate (Pan), the first step in CoA biosynthesis. This Helicobacter pylori (strain HPAG1) protein is Type III pantothenate kinase.